Consider the following 307-residue polypeptide: uncharacterized protein (307 aa).

Transmembrane regions (helical) follow at residues 1–21 (MLIL…MNML), 52–72 (IVFT…IGFV), 99–119 (FIAI…LLFF), 133–153 (FLGL…AGPL), 174–194 (LLIG…IGIL), 208–228 (AMSV…MAAV), 242–262 (VVFN…ATGF), and 277–297 (FSLL…NLFY).

The protein resides in the cell membrane. This is an uncharacterized protein from Bacillus subtilis (strain 168).